A 356-amino-acid chain; its full sequence is MLELSVNLDERSYPIYIGQSTLQDNGRLVHHIGDCRPIIITNDTIAPLYLQGLLAQLATLNPLHFIIPDGEQYKSLTWFEKISAFLLENNCGRDTCLIALGGGVVGDLTGFVAACYQRGIPFIQMPTTLLSQVDSSVGGKTAVNHPLGKNMIGAFYQPQAVFIDTQSLHTLPAREFAAGMAEVIKYGLIYDTELFAYLEQNVERLQQLDEACLQHIIYRCCEIKALIVAQDEKEQGLRALLNLGHTFAHAIEAQMGYGVWLHGEAVATGMVLAAKLAYTRQDLTAEDVTRISGLIAQYSLPTQIPAVMTSEHFLQHMRKDKKNKKGTIRFILPTQFGQCALVDDVSDDQVRALIEQ.

Residues aspartate 69–lysine 74, glycine 103–aspartate 107, threonine 127–threonine 128, lysine 140, and lysine 149 contribute to the NAD(+) site. Glutamate 182, histidine 245, and histidine 262 together coordinate Zn(2+).

Belongs to the sugar phosphate cyclases superfamily. Dehydroquinate synthase family. Co(2+) is required as a cofactor. It depends on Zn(2+) as a cofactor. Requires NAD(+) as cofactor.

The protein localises to the cytoplasm. It carries out the reaction 7-phospho-2-dehydro-3-deoxy-D-arabino-heptonate = 3-dehydroquinate + phosphate. It functions in the pathway metabolic intermediate biosynthesis; chorismate biosynthesis; chorismate from D-erythrose 4-phosphate and phosphoenolpyruvate: step 2/7. In terms of biological role, catalyzes the conversion of 3-deoxy-D-arabino-heptulosonate 7-phosphate (DAHP) to dehydroquinate (DHQ). In Pseudoalteromonas translucida (strain TAC 125), this protein is 3-dehydroquinate synthase.